Here is a 481-residue protein sequence, read N- to C-terminus: Trigger factor (481 aa).

One can recognise a PPIase FKBP-type domain in the interval 174-261; the sequence is GDIAVVGFKG…LKDLKTRELP (88 aa). Residues 430–481 form a disordered region; the sequence is ENSTVTEKAPEAESDAAKASKPAAAKKDASKAKTAKTSKAKTAKAESESAES. A compositionally biased stretch (basic and acidic residues) spans 437-447; that stretch reads KAPEAESDAAK. Residues 462 to 471 are compositionally biased toward basic residues; sequence KTAKTSKAKT. Residues 472–481 show a composition bias toward basic and acidic residues; sequence AKAESESAES.

The protein belongs to the FKBP-type PPIase family. Tig subfamily.

It localises to the cytoplasm. It catalyses the reaction [protein]-peptidylproline (omega=180) = [protein]-peptidylproline (omega=0). Functionally, involved in protein export. Acts as a chaperone by maintaining the newly synthesized protein in an open conformation. Functions as a peptidyl-prolyl cis-trans isomerase. The polypeptide is Trigger factor (Synechococcus sp. (strain WH7803)).